A 260-amino-acid chain; its full sequence is Small ribosomal subunit protein uS2 (260 aa).

The disordered stretch occupies residues 223–260 (EGRQGEDEEEASQEVAEGVSKDSLEDLKKSVEEGSNEE). Positions 241 to 254 (VSKDSLEDLKKSVE) are enriched in basic and acidic residues.

It belongs to the universal ribosomal protein uS2 family.

The polypeptide is Small ribosomal subunit protein uS2 (Pediococcus pentosaceus (strain ATCC 25745 / CCUG 21536 / LMG 10740 / 183-1w)).